We begin with the raw amino-acid sequence, 153 residues long: MNRDTRLYLAWLVALAATLGSLYFSEIRHFNPCPLCWAQRIFMYPLAVILGIAAFVGDHGVRRYVLPLAALGLGFAIFQNLETWGFVQSIKACTVNAAAACNTPWPVWGTSQDTLNRALTIPVLSMIAFALILALLSWPRQRVTVPESAAVQG.

The helical transmembrane segment at 4-23 (DTRLYLAWLVALAATLGSLY) threads the bilayer. A disulfide bridge connects residues C33 and C36. A run of 2 helical transmembrane segments spans residues 38–57 (AQRI…AFVG) and 64–81 (YVLP…FQNL). An intrachain disulfide couples C93 to C101. A helical membrane pass occupies residues 117–139 (RALTIPVLSMIAFALILALLSWP).

This sequence belongs to the DsbB family. BdbC subfamily.

The protein resides in the cell membrane. In terms of biological role, required for disulfide bond formation in some proteins. The chain is Probable disulfide formation protein from Deinococcus radiodurans (strain ATCC 13939 / DSM 20539 / JCM 16871 / CCUG 27074 / LMG 4051 / NBRC 15346 / NCIMB 9279 / VKM B-1422 / R1).